Here is a 262-residue protein sequence, read N- to C-terminus: Indole-3-glycerol phosphate synthase (262 aa).

Belongs to the TrpC family.

The catalysed reaction is 1-(2-carboxyphenylamino)-1-deoxy-D-ribulose 5-phosphate + H(+) = (1S,2R)-1-C-(indol-3-yl)glycerol 3-phosphate + CO2 + H2O. It participates in amino-acid biosynthesis; L-tryptophan biosynthesis; L-tryptophan from chorismate: step 4/5. The polypeptide is Indole-3-glycerol phosphate synthase (Staphylococcus epidermidis (strain ATCC 12228 / FDA PCI 1200)).